We begin with the raw amino-acid sequence, 739 residues long: Phosphoribosylformylglycinamidine synthase subunit PurL (739 aa).

H54 is a catalytic residue. ATP is bound by residues Y57 and K96. Residue E98 coordinates Mg(2+). Residues 99 to 102 (SHNH) and R121 contribute to the substrate site. The active-site Proton acceptor is the H100. Position 122 (D122) interacts with Mg(2+). Residue Q245 participates in substrate binding. Residue D275 coordinates Mg(2+). Residue 319–321 (ESQ) participates in substrate binding. ATP is bound by residues D504 and G541. N542 contributes to the Mg(2+) binding site. S544 is a binding site for substrate.

The protein belongs to the FGAMS family. Monomer. Part of the FGAM synthase complex composed of 1 PurL, 1 PurQ and 2 PurS subunits.

Its subcellular location is the cytoplasm. It carries out the reaction N(2)-formyl-N(1)-(5-phospho-beta-D-ribosyl)glycinamide + L-glutamine + ATP + H2O = 2-formamido-N(1)-(5-O-phospho-beta-D-ribosyl)acetamidine + L-glutamate + ADP + phosphate + H(+). It functions in the pathway purine metabolism; IMP biosynthesis via de novo pathway; 5-amino-1-(5-phospho-D-ribosyl)imidazole from N(2)-formyl-N(1)-(5-phospho-D-ribosyl)glycinamide: step 1/2. Functionally, part of the phosphoribosylformylglycinamidine synthase complex involved in the purines biosynthetic pathway. Catalyzes the ATP-dependent conversion of formylglycinamide ribonucleotide (FGAR) and glutamine to yield formylglycinamidine ribonucleotide (FGAM) and glutamate. The FGAM synthase complex is composed of three subunits. PurQ produces an ammonia molecule by converting glutamine to glutamate. PurL transfers the ammonia molecule to FGAR to form FGAM in an ATP-dependent manner. PurS interacts with PurQ and PurL and is thought to assist in the transfer of the ammonia molecule from PurQ to PurL. In Lactococcus lactis subsp. lactis (strain IL1403) (Streptococcus lactis), this protein is Phosphoribosylformylglycinamidine synthase subunit PurL.